A 143-amino-acid chain; its full sequence is Hemoglobin subunit alpha-2 (143 aa).

An N-acetylserine modification is found at Ser-2. One can recognise a Globin domain in the interval 2–143; sequence SLSSKDKATV…LALALSEKYR (142 aa). Residue His-60 coordinates O2. Residue His-89 participates in heme b binding.

Belongs to the globin family. As to quaternary structure, hb 2 is a heterotetramer of two alpha-2 and two beta-1 chains. Hb 3 is a heterotetramer of two alpha-2 and two beta-2 chains. In terms of tissue distribution, red blood cells.

In terms of biological role, involved in oxygen transport from gills to the various peripheral tissues. This chain is Hemoglobin subunit alpha-2 (hba2), found in Arctogadus glacialis (Arctic cod).